Consider the following 431-residue polypeptide: Adenylosuccinate synthetase (431 aa).

Residues 13-19 (GDEGKGK) and 41-43 (GHT) contribute to the GTP site. Asp14 functions as the Proton acceptor in the catalytic mechanism. Mg(2+)-binding residues include Asp14 and Gly41. Residues 14–17 (DEGK), 39–42 (NAGH), Thr130, Arg144, Gln225, Thr240, and Arg304 contribute to the IMP site. Catalysis depends on His42, which acts as the Proton donor. 300–306 (ATTGRER) is a binding site for substrate. GTP is bound by residues Arg306, 332 to 334 (KLD), and 415 to 417 (STG).

It belongs to the adenylosuccinate synthetase family. In terms of assembly, homodimer. It depends on Mg(2+) as a cofactor.

The protein resides in the cytoplasm. The enzyme catalyses IMP + L-aspartate + GTP = N(6)-(1,2-dicarboxyethyl)-AMP + GDP + phosphate + 2 H(+). It functions in the pathway purine metabolism; AMP biosynthesis via de novo pathway; AMP from IMP: step 1/2. Functionally, plays an important role in the de novo pathway of purine nucleotide biosynthesis. Catalyzes the first committed step in the biosynthesis of AMP from IMP. This chain is Adenylosuccinate synthetase, found in Colwellia psychrerythraea (strain 34H / ATCC BAA-681) (Vibrio psychroerythus).